A 323-amino-acid chain; its full sequence is Low affinity immunoglobulin gamma Fc region receptor II-c (323 aa).

The signal sequence occupies residues 1–42 (MGILSFLPVLATESDWADCKSPQPWGHMLLWTAVLFLAPVAG). Residues 43-223 (TPAAPPKAVL…VQAPSSSPMG (181 aa)) are Extracellular-facing. 2 consecutive Ig-like C2-type domains span residues 48–127 (PKAV…VHLT) and 131–213 (EWLV…VTIT). Disulfide bonds link C71–C113 and C152–C196. N-linked (GlcNAc...) asparagine glycans are attached at residues N106, N180, and N187. The helical transmembrane segment at 224–246 (IIVAVVTGIAVAAIVAAVVALIY) threads the bilayer. The Cytoplasmic segment spans residues 247-323 (CRKKRISANS…PPNDHVNSNN (77 aa)). Positions 277-323 (KRQPEETNNDYETADGGYMTLNPRAPTDDDKNIYLTLPPNDHVNSNN) are disordered. 2 positions are modified to phosphotyrosine; by SRC-type Tyr-kinases: Y294 and Y310.

Phosphorylated by SRC-type Tyr-kinases such as LYN, BLK, FYN and SYK. As to expression, isoform IIC1 is detected in monocytes, macrophages, polymorphonuclear cells and natural killer cells.

Its subcellular location is the cytoplasm. The protein localises to the cell membrane. Functionally, receptor for the Fc region of complexed immunoglobulins gamma. Low affinity receptor. Involved in a variety of effector and regulatory functions such as phagocytosis of immune complexes and modulation of antibody production by B-cells. This is Low affinity immunoglobulin gamma Fc region receptor II-c (FCGR2C) from Homo sapiens (Human).